The chain runs to 698 residues: UvrABC system protein B (698 aa).

Residues 25-183 (NGLNSGLVHQ…TLIDLQFERN (159 aa)) enclose the Helicase ATP-binding domain. 38 to 45 (GATGTGKT) contributes to the ATP binding site. A Beta-hairpin motif is present at residues 91–114 (YYDAYTPEAYVPSKDLYIEKEAQI). One can recognise a Helicase C-terminal domain in the interval 428–594 (QIDDLLGEIK…GIVKAVRDLT (167 aa)). Residues 622-657 (FKVINALEKQMKQAAKDLEFEKAALLRDQLTEMRQT) enclose the UVR domain.

The protein belongs to the UvrB family. Forms a heterotetramer with UvrA during the search for lesions. Interacts with UvrC in an incision complex.

The protein localises to the cytoplasm. Functionally, the UvrABC repair system catalyzes the recognition and processing of DNA lesions. A damage recognition complex composed of 2 UvrA and 2 UvrB subunits scans DNA for abnormalities. Upon binding of the UvrA(2)B(2) complex to a putative damaged site, the DNA wraps around one UvrB monomer. DNA wrap is dependent on ATP binding by UvrB and probably causes local melting of the DNA helix, facilitating insertion of UvrB beta-hairpin between the DNA strands. Then UvrB probes one DNA strand for the presence of a lesion. If a lesion is found the UvrA subunits dissociate and the UvrB-DNA preincision complex is formed. This complex is subsequently bound by UvrC and the second UvrB is released. If no lesion is found, the DNA wraps around the other UvrB subunit that will check the other stand for damage. The sequence is that of UvrABC system protein B from Herpetosiphon aurantiacus (strain ATCC 23779 / DSM 785 / 114-95).